The primary structure comprises 297 residues: Bifunctional protein FolD (297 aa).

NADP(+) contacts are provided by residues 167 to 169 (GRS) and isoleucine 233.

The protein belongs to the tetrahydrofolate dehydrogenase/cyclohydrolase family. Homodimer.

The catalysed reaction is (6R)-5,10-methylene-5,6,7,8-tetrahydrofolate + NADP(+) = (6R)-5,10-methenyltetrahydrofolate + NADPH. It carries out the reaction (6R)-5,10-methenyltetrahydrofolate + H2O = (6R)-10-formyltetrahydrofolate + H(+). It functions in the pathway one-carbon metabolism; tetrahydrofolate interconversion. In terms of biological role, catalyzes the oxidation of 5,10-methylenetetrahydrofolate to 5,10-methenyltetrahydrofolate and then the hydrolysis of 5,10-methenyltetrahydrofolate to 10-formyltetrahydrofolate. The sequence is that of Bifunctional protein FolD from Zymomonas mobilis subsp. mobilis (strain ATCC 31821 / ZM4 / CP4).